Reading from the N-terminus, the 377-residue chain is Mitogen-activated protein kinase HOG1 (377 aa).

In terms of domain architecture, Protein kinase spans 23-305; the sequence is YTELNPVGMG…AVEGLTHPYM (283 aa). ATP-binding positions include 29–37 and Lys52; that span reads VGMGAFGLV. Residue Asp144 is the Proton acceptor of the active site. A Phosphothreonine modification is found at Thr174. A TXY motif is present at residues 174-176; it reads TGY. A Phosphotyrosine modification is found at Tyr176. Residues 354-377 are disordered; it reads NETEGSEQPDSQVEQNNLDSANGA. Residues 359-377 show a composition bias toward polar residues; the sequence is SEQPDSQVEQNNLDSANGA.

Belongs to the protein kinase superfamily. Ser/Thr protein kinase family. MAP kinase subfamily. HOG1 sub-subfamily. The cofactor is Mg(2+). In terms of processing, dually phosphorylated on Thr-174 and Tyr-176, which activates the enzyme. Phosphorylated in response to oxidative and salt stress.

The protein resides in the cytoplasm. Its subcellular location is the nucleus. The catalysed reaction is L-seryl-[protein] + ATP = O-phospho-L-seryl-[protein] + ADP + H(+). The enzyme catalyses L-threonyl-[protein] + ATP = O-phospho-L-threonyl-[protein] + ADP + H(+). With respect to regulation, activated by tyrosine and threonine phosphorylation. In terms of biological role, proline-directed serine/threonine-protein kinase involved in a signal transduction pathway that is activated by changes in the osmolarity of the extracellular environment. Controls osmotic regulation of transcription of target genes. Regulates stress-induced production and accumulation of glycerol and D-arabitol. HOG1 is also involved in virulence, morphogenesis and oxidative stress response especially through its role in chlamydospore formation, an oxygen-dependent morphogenetic program. This is Mitogen-activated protein kinase HOG1 (HOG1) from Candida albicans (strain SC5314 / ATCC MYA-2876) (Yeast).